Consider the following 363-residue polypeptide: Membrane-bound lytic murein transglycosylase C (363 aa).

Positions methionine 1–alanine 15 are cleaved as a signal peptide. The N-palmitoyl cysteine moiety is linked to residue cysteine 16. The S-diacylglycerol cysteine moiety is linked to residue cysteine 16.

It belongs to the transglycosylase Slt family.

The protein resides in the cell outer membrane. It catalyses the reaction Exolytic cleavage of the (1-&gt;4)-beta-glycosidic linkage between N-acetylmuramic acid (MurNAc) and N-acetylglucosamine (GlcNAc) residues in peptidoglycan, from either the reducing or the non-reducing ends of the peptidoglycan chains, with concomitant formation of a 1,6-anhydrobond in the MurNAc residue.. Functionally, murein-degrading enzyme. May play a role in recycling of muropeptides during cell elongation and/or cell division. The protein is Membrane-bound lytic murein transglycosylase C of Histophilus somni (strain 129Pt) (Haemophilus somnus).